A 328-amino-acid polypeptide reads, in one-letter code: UPF0252 protein PF0978 (328 aa).

The helical transmembrane segment at 3-23 (VPLLILLFLVLTSGCIAPSTP) threads the bilayer.

This sequence belongs to the UPF0252 family.

It is found in the membrane. The polypeptide is UPF0252 protein PF0978 (Pyrococcus furiosus (strain ATCC 43587 / DSM 3638 / JCM 8422 / Vc1)).